Reading from the N-terminus, the 262-residue chain is Vibriobactin-specific 2,3-dihydro-2,3-dihydroxybenzoate dehydrogenase (262 aa).

12–36 (LLVGSARGIGFSVLEHLLQAGAQVM) contributes to the NAD(+) binding site. Substrate is bound at residue Ser145. Tyr158 acts as the Proton acceptor in catalysis.

The protein belongs to the short-chain dehydrogenases/reductases (SDR) family.

The enzyme catalyses (2S,3S)-2,3-dihydroxy-2,3-dihydrobenzoate + NAD(+) = 2,3-dihydroxybenzoate + NADH + H(+). The protein operates within siderophore biosynthesis; vibriobactin biosynthesis. In terms of biological role, involved in an early step of the biosynthesis of the catechol siderophore vibriobactin. Vibriobactin is a chelating compound involved in transporting iron from the bacterial environment into the cell cytoplasm. The protein is Vibriobactin-specific 2,3-dihydro-2,3-dihydroxybenzoate dehydrogenase (vibA) of Vibrio cholerae serotype O1 (strain ATCC 39315 / El Tor Inaba N16961).